We begin with the raw amino-acid sequence, 130 residues long: Ribosome-binding factor A (130 aa).

The protein belongs to the RbfA family. Monomer. Binds 30S ribosomal subunits, but not 50S ribosomal subunits or 70S ribosomes.

The protein localises to the cytoplasm. In terms of biological role, one of several proteins that assist in the late maturation steps of the functional core of the 30S ribosomal subunit. Associates with free 30S ribosomal subunits (but not with 30S subunits that are part of 70S ribosomes or polysomes). Required for efficient processing of 16S rRNA. May interact with the 5'-terminal helix region of 16S rRNA. The sequence is that of Ribosome-binding factor A from Roseiflexus castenholzii (strain DSM 13941 / HLO8).